A 397-amino-acid polypeptide reads, in one-letter code: Sporulation-specific protein 20 (397 aa).

Positions 1–26 (MGFRKILASKSHHSRHHNQHHKNLKL) are disordered. An inhibitory region region spans residues 4–50 (RKILASKSHHSRHHNQHHKNLKLQNHRYVLISNITGSHETKYLSPFR). Residues 10 to 26 (KSHHSRHHNQHHKNLKL) show a composition bias toward basic residues. The interval 51–95 (MDNCSGSRRRDRLHVKLKSLRNKIHKQLHPNCRFDDATKTSDDKC) is positive regulatory region. The 63-residue stretch at 330–392 (NQMEIDLYGN…QAKRYRLEKV (63 aa)) folds into the t-SNARE coiled-coil homology domain.

The protein belongs to the SNAP-25 family. As to quaternary structure, interacts with the t-SNARE SSO1 and the v-SNARE SNC2.

The protein localises to the cell membrane. It localises to the prospore membrane. Its function is as follows. Required to maintain the prospore membrane to the nucleus during sporulation in order to capture the daughter nuclei and form the spores. Mediates the fusion of exocytic vesicles with the plasma membrane during sporulation through its interactions with the t-SNARE SSO1 and v-SNARE SNC2. This chain is Sporulation-specific protein 20 (SPO20), found in Saccharomyces cerevisiae (strain ATCC 204508 / S288c) (Baker's yeast).